Here is a 1379-residue protein sequence, read N- to C-terminus: Vascular endothelial growth factor receptor 3 (1379 aa).

The N-terminal stretch at 1-19 is a signal peptide; that stretch reads MKRVCTLPLWLWLGIVSEA. Residues 20 to 788 are Extracellular-facing; it reads DLVSSYSMTP…EGSDDKTNVE (769 aa). Ig-like C2-type domains follow at residues 30–136, 160–222, 240–335, 340–421, 430–566, 569–684, and 691–777; these read PTLS…TAVS, KENT…IDNK, DIQL…TDVI, PFIN…KRIS, PRIH…FYVT, PDGF…KYIS, and PRLK…ASVS. 2 disulfides stabilise this stretch: Cys51/Cys120 and Cys167/Cys215. Positions 73-93 are disordered; the sequence is RRWNSQPQQRPVGAGNPEEDC. Residues Asn113, Asn175, Asn260, and Asn308 are each glycosylated (N-linked (GlcNAc...) asparagine). Residues Cys261 and Cys319 are joined by a disulfide bond. 3 disulfide bridges follow: Cys453/Cys548, Cys474/Cys500, and Cys592/Cys666. Asn529, Asn541, Asn596, Asn608, Asn655, Asn696, and Asn703 each carry an N-linked (GlcNAc...) asparagine glycan. Cys712 and Cys761 are joined by a disulfide. A glycan (N-linked (GlcNAc...) asparagine) is linked at Asn771. Residues 789–809 traverse the membrane as a helical segment; that stretch reads IVILIGTGVIAVFFWILLIII. Over 810-1379 the chain is Cytoplasmic; sequence FCNIKRPAHA…LHASFFSEQY (570 aa). The Protein kinase domain maps to 858-1185; the sequence is LRLGKVLGHG…DLVEILGNLL (328 aa). ATP contacts are provided by residues 864-872 and Lys892; that span reads LGHGAFGKV. The Proton acceptor role is filled by Asp1049. 2 positions are modified to phosphotyrosine; by autocatalysis: Tyr1075 and Tyr1080. Residues 1196-1224 form a disordered region; it reads YIPLNDSHSSEDDGFSQVPSSAQQNSDEE. 5 positions are modified to phosphotyrosine; by autocatalysis: Tyr1239, Tyr1240, Tyr1274, Tyr1342, and Tyr1346. Positions 1299 to 1379 are disordered; that stretch reads RHRKEGGFSS…LHASFFSEQY (81 aa). The span at 1332-1343 shows a compositional bias: polar residues; the sequence is YGSQVGGQTFYN.

Belongs to the protein kinase superfamily. Tyr protein kinase family. CSF-1/PDGF receptor subfamily. In terms of assembly, interacts with VEGFC and VEGFD. Monomer in the absence of bound VEGFC or VEGFD. Homodimer in the presence of bound VEGFC or VEGFD. Post-translationally, autophosphorylated on tyrosine residues upon ligand binding. Autophosphorylation occurs in trans, i.e. one subunit of the dimeric receptor phosphorylates tyrosine residues on the other subunit.

It localises to the cell membrane. Its subcellular location is the cytoplasm. The protein resides in the nucleus. The enzyme catalyses L-tyrosyl-[protein] + ATP = O-phospho-L-tyrosyl-[protein] + ADP + H(+). Its activity is regulated as follows. Present in an inactive conformation in the absence of bound ligand. Binding of VEGFC or VEGFD leads to dimerization and activation by autophosphorylation on tyrosine residues. Tyrosine-protein kinase that acts as a cell-surface receptor for VEGFC and VEGFD, and plays an essential role in lymphangiogenesis and in the development of the vascular network and the cardiovascular system during embryonic development. Promotes proliferation, survival and migration of endothelial cells, and regulates angiogenic sprouting. Mediates activation of the MAPK1/ERK2, MAPK3/ERK1 signaling pathway, of MAPK8 and the JUN signaling pathway, and of the AKT1 signaling pathway. The sequence is that of Vascular endothelial growth factor receptor 3 (FLT4) from Coturnix coturnix (Common quail).